A 272-amino-acid chain; its full sequence is MDNLIKDMRENLNSYSFKVVSDLVKELEVNRDNKAQIKELADLLKEDKRKNVSSLGNRLEKNLNNLIKEEERVKNMYLFDKSFGDYKYVAGVDEVGRGPLAGPIVSAAVILDSSDLDDIILYINDSKKLSEHKREELSEIIKEKALSYSISMCDSKEIDEKGIGYCNNEVFIKACEGLSIKPDLVLSDGYLIKNFNGENKHVIKGDTKSACIACASIIAKVYRDNIMKEYNKKYPQYDFEKNVGYGTKTHVDALKEVGPTEIHRMSFLKNIL.

Residues 87 to 272 enclose the RNase H type-2 domain; that stretch reads KYVAGVDEVG…HRMSFLKNIL (186 aa). 3 residues coordinate a divalent metal cation: aspartate 93, glutamate 94, and aspartate 188.

This sequence belongs to the RNase HII family. It depends on Mn(2+) as a cofactor. Mg(2+) is required as a cofactor.

The protein localises to the cytoplasm. The catalysed reaction is Endonucleolytic cleavage to 5'-phosphomonoester.. Functionally, endonuclease that specifically degrades the RNA of RNA-DNA hybrids. The sequence is that of Ribonuclease HII from Clostridium perfringens (strain 13 / Type A).